Here is a 1488-residue protein sequence, read N- to C-terminus: MIYRWLLLVSCLLLALLAQRGAAKSSSPKIAPPTKIDHKPSSLFYFEDTDTVLMNTVNGDLLRSVDAGETWSVVEGDDGGMKHHVLLIRQHPYDNKKAYALGPNGRHWVTTDQAKTWASFNIAEFPAIRHYPLVFHGGDSSKVIFQGEECAGRYCIVRSYYTTDDFATVKLLRESTGGCAWAVGHPQFAEDLNLAEEIKDRSFCVVPGLKVPLPHANRLVYSDDYFRGNAEGTETKLQEGRPVSGVISTAAVKKFIVAAAKSKGTEELALYVTVDAKNWHRAEFDGHRIEEDAYTMLESTNYSLQVDVLTSPRSGMGVLFTSNSNGTYFTRNIEHTNRNSEGMVDFEKIAGIQGIVLVNTVQNPEEVESGSAKKKITSRISFDDGRTFQPLKSDGENLHLHSVTALRNIGRVFSSPAPGLVMGIGNTGNHLQEYAECNLYISDDAGVTWRRAIKHPHKYEFGDQGAVVIAVRDEGRVDKINYSLDHGKEWASVELQHKIYPTMVTTTPDSTSLKFIVVGSLKESQDGEHVIYSIDFDGLHERKCEEDDFEKWPARLDEHGKPDCLMGHKQFYMRRRANANCFVDEEFKDPQPIFEACKCTAEDFECEYRRTEDGKGCVIPSPLTPPEGECKKPDDKFMGPSGWRLIPGDACIRDGGENLDKEIERSCKDASSPSTDGKIRVTLQLLEARDYAQYYYLERQSSSSGSDETIIMLSSEHEVYVTHDHGKTWERPLKGEEITRVYLHPYSSDVAFLLTDGKEGFWTEDRGHTFKPFQAPAPPTQDRFLQVMAFHPVHKDRLIWTGAVDCHSGDCHSDAFIKKGRGKNWEPLLSYVQKCEFESRETRPNSTNLVYCEQFEKQSKNGRLQLLSSDDFFNDNEVQFVDVINYATMSEFIIVASRQPENPDSLVASTSVDGRTFARAQFPPNVQVPVQTAYTVLESSTHAVFLHVTASSTEGGEYGPIIKSNSNGTSYVLSISAVNRNSLGYVDFEKAQGLEGVAVVNVVSNVADVSKKVPKKLKTMITHNDGAQWMLLPPPTKDADGKSFGCSVVAGKGTDDCSLHLHGYTERKDERDTFASGSAIGLMMAVGNVGDHLAGGDEADTFITNDGGISWKSVKKGKYMWEYGDSGSVIVIVPESKPTKTIHYSLDEGDTWEEFQFSDVEVRINDISTVPSDTSKNFLLWARLSNSEVQDKFATFNIDFSGVRPRPCLLDENQGNSDDYYIWEPKHPFQENNCLFGHSEQYHRKKPSAQCWNDWRESHVHSIGTNCTCTRADYECDYNYEPQSDGSCALVPGLPKPDAMEICKKDPDTIEYWEPTGYRRIPQTTCQGGLNLDHFVSKPCPNKEEEYKQKHGISGVGLFFAIVTPLAVAGAAGYYAYSKWDGKFGQIRLGESAGTSQSFLSRDSWLVTVPIAIVAGTVAVARALPLLVTSLWRGASGFIRLGRGRGYSRPYASRGSFAARRGDYTSIVDDEDELLGVEDAELDEDDEA.

The first 23 residues, 1-23 (MIYRWLLLVSCLLLALLAQRGAA), serve as a signal peptide directing secretion. Residues 24–1351 (KSSSPKIAPP…NKEEEYKQKH (1328 aa)) are Lumenal-facing. One copy of the BNR 1 repeat lies at 63–72 (RSVDAGETWS). 2 N-linked (GlcNAc...) asparagine glycosylation sites follow: N301 and N325. 2 BNR repeats span residues 380-389 (ISFDDGRTFQ) and 440-450 (YISDDAGVTWR). An N-linked (GlcNAc...) asparagine glycan is attached at N481. BNR repeat units follow at residues 482–490 (YSLDHGKEW) and 720–730 (YVTHDHGKTWE). N-linked (GlcNAc...) asparagine glycosylation is found at N845 and N967. 2 BNR repeats span residues 1102–1112 (FITNDGGISWK) and 1144–1153 (YSLDEGDTWE). The N-linked (GlcNAc...) asparagine glycan is linked to N1266. Residues 1352-1372 (GISGVGLFFAIVTPLAVAGAA) traverse the membrane as a helical segment. At 1373 to 1405 (GYYAYSKWDGKFGQIRLGESAGTSQSFLSRDSW) the chain is on the cytoplasmic side. A helical transmembrane segment spans residues 1406-1426 (LVTVPIAIVAGTVAVARALPL). Residues 1427–1488 (LVTSLWRGAS…DAELDEDDEA (62 aa)) are Lumenal-facing.

The protein belongs to the VPS10-related sortilin family.

Its subcellular location is the golgi apparatus. It localises to the trans-Golgi network membrane. The protein localises to the prevacuolar compartment membrane. Its function is as follows. Functions as a sorting receptor in the Golgi compartment required for the intracellular sorting and delivery of soluble vacuolar proteins, like carboxypeptidase Y (CPY) and proteinase A. Executes multiple rounds of sorting by cycling between the late Golgi and a prevacuolar endosome-like compartment. This is Vacuolar protein sorting/targeting protein 10 (vps10) from Aspergillus flavus (strain ATCC 200026 / FGSC A1120 / IAM 13836 / NRRL 3357 / JCM 12722 / SRRC 167).